A 61-amino-acid polypeptide reads, in one-letter code: uncharacterized protein (61 aa).

This is an uncharacterized protein from Escherichia coli O6:K15:H31 (strain 536 / UPEC).